The chain runs to 232 residues: tRNA (guanine-N(1)-)-methyltransferase (232 aa).

Residues Gly112 and 132–137 (IGDYIL) contribute to the S-adenosyl-L-methionine site.

This sequence belongs to the RNA methyltransferase TrmD family. In terms of assembly, homodimer.

The protein resides in the cytoplasm. It catalyses the reaction guanosine(37) in tRNA + S-adenosyl-L-methionine = N(1)-methylguanosine(37) in tRNA + S-adenosyl-L-homocysteine + H(+). Functionally, specifically methylates guanosine-37 in various tRNAs. The sequence is that of tRNA (guanine-N(1)-)-methyltransferase from Methylacidiphilum infernorum (isolate V4) (Methylokorus infernorum (strain V4)).